We begin with the raw amino-acid sequence, 462 residues long: Serine--tRNA ligase, cytoplasmic (462 aa).

A Glycyl lysine isopeptide (Lys-Gly) (interchain with G-Cter in URM1) cross-link involves residue Lys241. L-serine is bound at residue 246–248 (TSE). Residues 279-281 (RRE) and Val295 contribute to the ATP site. Glu302 contributes to the L-serine binding site. Glycyl lysine isopeptide (Lys-Gly) (interchain with G-Cter in URM1) cross-links involve residues Lys350 and Lys351. Residue 366–369 (ELVS) coordinates ATP. Cysteine persulfide occurs at positions 373 and 400. Residue Thr404 coordinates L-serine.

It belongs to the class-II aminoacyl-tRNA synthetase family. Type-1 seryl-tRNA synthetase subfamily. As to quaternary structure, homodimer; the tRNA molecule probably binds across the dimer. Interacts with ABP140; interaction is required for the tRNA N(3)-methylcytidine methyltransferase activity of ABP140. Post-translationally, conjugated to URM1, a ubiquitin-like protein, in response to oxidative stresses. The attachment of URM1 to lysine residues exclusively depends on the presence of a peroxidatic cysteine in the target protein, with low specificity for the particular residue, motif, or structural context at which urmylation can occur. The URM1-conjugation reaction is mechanistically and directly coupled to the process of cysteine persulfidation, transfering the sulfur atom of the URM1 thiocarboxyl group to redox-active cysteine residues in the target protein if it is exposed to oxidative conditions. Persulfidated on specific redox-active cysteine residues. Persulfidation (also called protein S-sulfhydration) may provide a molecular mechanism that enables cells to protect vulnerable cysteine residues from reactive oxygen species (ROS) under stress conditions.

Its subcellular location is the cytoplasm. It is found in the cytosol. The enzyme catalyses tRNA(Ser) + L-serine + ATP = L-seryl-tRNA(Ser) + AMP + diphosphate + H(+). Functionally, catalyzes the attachment of serine to tRNA(Ser) in a two-step reaction: serine is first activated by ATP to form Ser-AMP and then transferred to the acceptor end of tRNA(Ser). The polypeptide is Serine--tRNA ligase, cytoplasmic (SES1) (Saccharomyces cerevisiae (strain ATCC 204508 / S288c) (Baker's yeast)).